Here is a 5218-residue protein sequence, read N- to C-terminus: HC-toxin synthetase (5218 aa).

Positions 223–620 are adenylation 1; sequence SARAHEQDAN…VGRSDTQIKL (398 aa). The 75-residue stretch at 769–843 folds into the Carrier 1 domain; it reads MNDDSLLLTA…TAASCIKSAQ (75 aa). Ser803 is modified (O-(pantetheine 4'-phosphoryl)serine). The tract at residues 858-1154 is condensation 1; the sequence is IPVSPIQKLF…GWFTTISPVY (297 aa). An epimerization region spans residues 1338 to 1806; it reads EGVYPGSPMQ…LPIVSEHDTA (469 aa). Positions 1828–2233 are adenylation 2; sequence SRKVVEHPQR…IGRKDTQVKM (406 aa). Residues 2379–2453 form the Carrier 2 domain; it reads ETTDTVEDRL…DMAKLFSHGQ (75 aa). Ser2414 bears the O-(pantetheine 4'-phosphoryl)serine mark. The condensation 2 stretch occupies residues 2531-2929; the sequence is EDVFPCTPMQ…MEQFGHNLQT (399 aa). Positions 2979 to 3386 are adenylation 3; the sequence is LEETAQSQPA…GRKDGQIKLR (408 aa). The 77-residue stretch at 3532–3608 folds into the Carrier 3 domain; that stretch reads QVLTTNESVL…DMAGQISFVQ (77 aa). Residue Ser3569 is modified to O-(pantetheine 4'-phosphoryl)serine. Residues 3649 to 4102 are condensation 3; the sequence is EDVYPCTPLQ…PALSEAHLAE (454 aa). The segment at 4134 to 4530 is adenylation 4; it reads RRAQQSPNSQ…NLYYVRRKDS (397 aa). The 75-residue stretch at 4666–4740 folds into the Carrier 4 domain; sequence THTQKLLRQL…AMSSLIDEHN (75 aa). Ser4701 is modified (O-(pantetheine 4'-phosphoryl)serine). The interval 4785-5101 is condensation 4; the sequence is TLPCTEYQQM…SAIREFIPQA (317 aa).

Belongs to the NRP synthetase family. It depends on pantetheine 4'-phosphate as a cofactor.

It participates in mycotoxin biosynthesis; HC-toxin biosynthesis. Functionally, non-ribosomal peptide synthetase, part of the diffuse TOX2 gene cluster that mediates the biosynthesis of the HC-toxin, cyclic tetrapeptide of structure cyclo(D-Pro-L-Ala-D-Ala-L-Aeo), where Aeo stands for 2-amino-9,10-epoxi-8-oxodecanoic acid. HC-toxin is a determinant of specificity and virulence in the interaction between the producing fungus and its host, maize. HTS1, contains four modules, one for each amino acid in HC-toxin, with the order of activation being most likely Pro, Ala, Ala, and Aeo. In addition, HTS1 has one epimerase domain between modules 1 and 2, which is responsible for epimerizing L-Pro to D-Pro. The absence of an epimerizing domain after module 3, for producing D-Ala, can be explained by the presence in the cluster of TOXG, an Ala racemase, which produces D-Ala for incorporation by HTS1 into HC-toxin. The polypeptide is HC-toxin synthetase (Cochliobolus carbonum (Maize leaf spot fungus)).